The chain runs to 44 residues: Protein PsbN (44 aa).

Residues 6–26 form a helical membrane-spanning segment; it reads FFFTLFLWFFLLSITIYSIYI.

Belongs to the PsbN family.

The protein resides in the plastid. The protein localises to the chloroplast thylakoid membrane. Functionally, may play a role in photosystem I and II biogenesis. The chain is Protein PsbN from Oedogonium cardiacum (Filamentous green alga).